The sequence spans 600 residues: Elongation factor 4 (600 aa).

The tr-type G domain maps to Ser-7–Thr-189. GTP-binding positions include Asp-19 to Thr-24 and Asn-136 to Asp-139.

Belongs to the TRAFAC class translation factor GTPase superfamily. Classic translation factor GTPase family. LepA subfamily.

The protein localises to the cell inner membrane. It catalyses the reaction GTP + H2O = GDP + phosphate + H(+). Required for accurate and efficient protein synthesis under certain stress conditions. May act as a fidelity factor of the translation reaction, by catalyzing a one-codon backward translocation of tRNAs on improperly translocated ribosomes. Back-translocation proceeds from a post-translocation (POST) complex to a pre-translocation (PRE) complex, thus giving elongation factor G a second chance to translocate the tRNAs correctly. Binds to ribosomes in a GTP-dependent manner. The polypeptide is Elongation factor 4 (Gluconobacter oxydans (strain 621H) (Gluconobacter suboxydans)).